A 599-amino-acid polypeptide reads, in one-letter code: Endo-1,4-beta-xylanase B (599 aa).

Residues Met1–Ala37 form the signal peptide. One can recognise a CBM2 domain in the interval Ala38–Ala136. A disulfide bond links Cys39 and Cys133. One can recognise a CBM6 domain in the interval Leu163–Val289. Positions Ser315–Asn595 constitute a GH10 domain. The active-site Proton donor is Glu431. Catalysis depends on Glu530, which acts as the Nucleophile.

The protein belongs to the glycosyl hydrolase 10 (cellulase F) family.

It catalyses the reaction Endohydrolysis of (1-&gt;4)-beta-D-xylosidic linkages in xylans.. It functions in the pathway glycan metabolism; hemicellulose degradation. Xylanase B contributes to hydrolyze hemicellulose, the major component of plant cell-walls. This Cellvibrio japonicus (strain Ueda107) (Pseudomonas fluorescens subsp. cellulosa) protein is Endo-1,4-beta-xylanase B (xynB).